We begin with the raw amino-acid sequence, 502 residues long: MEFSVKSGSPEKQRSACIVVGVFEPRRLSPVAEQLDKISDGYISSLLRRGDLEGKPGQMLLLHQVPGVLSERVLLVGCGKERELGERQYKEIIQKTISTLNETGSMEAVCFLTELHVKGRDTYWKVRQAVEATKDGLYTFDQFKSVKPETRRPLRKLVFNVPTRRELNLGEKAITHGLAIASGVKASKDLGNMPPNIANPAYLASQARRLADDYETVSTKIIGEQEMEKLGMTSYLAVGRGSKNESMMSIIEYKGNPESEAKPIVLVGKGLTFDSGGISLKPGEGMDEMKYDMCGAASVFGTMKALAKLNLPINVIGVLAGCENMPGSNAYRPGDILTTMSGQTVEVLNTDAEGRLVLCDALTYVERFEPDCVVDVATLTGACVIALGHHISGVISNHNPLSHELVNASEQASDRAWRLPMADEYHEQLKSPFADMANIGGRPAGTITAGCFLSKFAKKYNWAHLDIAGTAWKSGAAKGSTGRPVSMLVQFLLNRSGQETEE.

K269 and D274 together coordinate Mn(2+). K281 is a catalytic residue. Mn(2+) contacts are provided by D292, D351, and E353. Residue R355 is part of the active site.

The protein belongs to the peptidase M17 family. It depends on Mn(2+) as a cofactor.

It localises to the cytoplasm. It catalyses the reaction Release of an N-terminal amino acid, Xaa-|-Yaa-, in which Xaa is preferably Leu, but may be other amino acids including Pro although not Arg or Lys, and Yaa may be Pro. Amino acid amides and methyl esters are also readily hydrolyzed, but rates on arylamides are exceedingly low.. The catalysed reaction is Release of an N-terminal amino acid, preferentially leucine, but not glutamic or aspartic acids.. Presumably involved in the processing and regular turnover of intracellular proteins. Catalyzes the removal of unsubstituted N-terminal amino acids from various peptides. This chain is Probable cytosol aminopeptidase, found in Vibrio campbellii (strain ATCC BAA-1116).